Reading from the N-terminus, the 322-residue chain is UDP-N-acetylenolpyruvoylglucosamine reductase (322 aa).

Residues 36-202 form the FAD-binding PCMH-type domain; it reads RAGGPAQVLF…TSVLFEGVPG (167 aa). Residue Arg182 is part of the active site. The active-site Proton donor is the Ser231. The active site involves Glu301.

This sequence belongs to the MurB family. FAD serves as cofactor.

Its subcellular location is the cytoplasm. The enzyme catalyses UDP-N-acetyl-alpha-D-muramate + NADP(+) = UDP-N-acetyl-3-O-(1-carboxyvinyl)-alpha-D-glucosamine + NADPH + H(+). It functions in the pathway cell wall biogenesis; peptidoglycan biosynthesis. Cell wall formation. This Brucella canis (strain ATCC 23365 / NCTC 10854 / RM-666) protein is UDP-N-acetylenolpyruvoylglucosamine reductase.